Consider the following 433-residue polypeptide: 26S proteasome regulatory subunit 7 (433 aa).

The tract at residues 1 to 23 (MPDYLGADQRKTKEEEKEDKPIR) is disordered. The segment covering 8–23 (DQRKTKEEEKEDKPIR) has biased composition (basic and acidic residues). 216–223 (GPPGTGKT) provides a ligand contact to ATP.

It belongs to the AAA ATPase family. Phosphorylated. Dephosphorylated by ublcp1 which impairs psmc2 ATPase activity and disrupts 26S proteasome assembly.

Its subcellular location is the cytoplasm. The protein localises to the nucleus. Its function is as follows. The 26S proteasome is involved in the ATP-dependent degradation of ubiquitinated proteins. The regulatory (or ATPase) complex confers ATP dependency and substrate specificity to the 26S complex. The polypeptide is 26S proteasome regulatory subunit 7 (psmc2) (Xenopus laevis (African clawed frog)).